Here is a 684-residue protein sequence, read N- to C-terminus: Histamine oxidase (684 aa).

316–327 (YFDSGEYLVGRD) serves as a coordination point for substrate. Asp-318 functions as the Proton acceptor in the catalytic mechanism. The cysteines at positions 337 and 363 are disulfide-linked. 399–404 (VGNYDY) lines the substrate pocket. The active-site Schiff-base intermediate with substrate; via topaquinone is Tyr-402. Position 402 is a 2',4',5'-topaquinone (Tyr-402). 2 residues coordinate Cu cation: His-451 and His-453. Ca(2+)-binding residues include Asp-460, Glu-500, Tyr-590, and Asp-601. Residue Asp-460 participates in Mn(2+) binding. Asp-601 is a Mn(2+) binding site. Cu cation is bound at residue His-612. Residues 647 to 684 (SSAAGHCGTGSEREHAAPGGTAVGHSGPDTGGQGHCGH) form a disordered region. A compositionally biased stretch (gly residues) spans 675–684 (DTGGQGHCGH).

Belongs to the copper/topaquinone oxidase family. In terms of assembly, homodimer. It depends on Cu cation as a cofactor. Zn(2+) is required as a cofactor. Ca(2+) serves as cofactor. Requires L-topaquinone as cofactor. The cofactor is Mn(2+). In terms of processing, topaquinone (TPQ) is generated by copper-dependent autoxidation of a specific tyrosyl residue.

It localises to the cytoplasm. It carries out the reaction a primary methyl amine + O2 + H2O = an aldehyde + H2O2 + NH4(+). It catalyses the reaction histamine + O2 + H2O = imidazole-4-acetaldehyde + H2O2 + NH4(+). Functionally, oxidizes histamine. Other amines including phenethylamine, tyramine, tryptamine, putrescine, and benzylamine also serve as substrate. This Arthrobacter globiformis protein is Histamine oxidase.